Consider the following 246-residue polypeptide: Probable transcriptional regulatory protein TM1040_1893 (246 aa).

Residues 1 to 21 (MAGHSKWANIQHRKGRQDAAR) form a disordered region.

It belongs to the TACO1 family.

The protein resides in the cytoplasm. In Ruegeria sp. (strain TM1040) (Silicibacter sp.), this protein is Probable transcriptional regulatory protein TM1040_1893.